A 310-amino-acid polypeptide reads, in one-letter code: Putative carboxypeptidase SCO6489 (310 aa).

The Nucleophile role is filled by Ser-116. Catalysis depends on charge relay system residues Glu-212 and His-277.

The protein belongs to the peptidase S66 family.

The sequence is that of Putative carboxypeptidase SCO6489 from Streptomyces coelicolor (strain ATCC BAA-471 / A3(2) / M145).